Here is a 436-residue protein sequence, read N- to C-terminus: Trigger factor (436 aa).

The PPIase FKBP-type domain occupies 163 to 248; sequence GDRVTVDFEG…VKKIEAAHLP (86 aa).

It belongs to the FKBP-type PPIase family. Tig subfamily.

Its subcellular location is the cytoplasm. The catalysed reaction is [protein]-peptidylproline (omega=180) = [protein]-peptidylproline (omega=0). Functionally, involved in protein export. Acts as a chaperone by maintaining the newly synthesized protein in an open conformation. Functions as a peptidyl-prolyl cis-trans isomerase. In Paracidovorax citrulli (strain AAC00-1) (Acidovorax citrulli), this protein is Trigger factor.